The sequence spans 252 residues: Protein A47 (252 aa).

The protein belongs to the orthopoxvirus A47 protein family.

This is Protein A47 from Vaccinia virus (strain Western Reserve) (VACV).